The primary structure comprises 404 residues: Ubiquitin-like modifier-activating enzyme 5 (404 aa).

The ATP site is built by Gly83, Asp104, Lys127, Asn150, and Asn184. Zn(2+)-binding residues include Cys226 and Cys229. The active-site Glycyl thioester intermediate is the Cys250. Positions 303 and 308 each coordinate Zn(2+). The interval 372–404 (APEKSSETSEETVSAATADETSLEDLMAQMKSM) is disordered. The span at 382-391 (ETVSAATADE) shows a compositional bias: low complexity.

This sequence belongs to the ubiquitin-activating E1 family. UBA5 subfamily. As to quaternary structure, interacts (via C-terminus) with Ufc1. Interacts with Ufm1.

Its subcellular location is the cytoplasm. The protein localises to the nucleus. It is found in the golgi apparatus. Functionally, E1-like enzyme which activates UFM1. The protein is Ubiquitin-like modifier-activating enzyme 5 of Drosophila melanogaster (Fruit fly).